A 410-amino-acid polypeptide reads, in one-letter code: Cytohesin-2 (410 aa).

Residues 13-56 adopt a coiled-coil conformation; it reads PEERMELENIRRRKQELLVEIQRLREELSEAMSEVEGLEANEGS. In terms of domain architecture, SEC7 spans 54–241; sequence EGSKTLQRNR…RNLYDSIRNE (188 aa). In terms of domain architecture, PH spans 259 to 386; sequence NPDREGWLLK…WIKSIQAAVS (128 aa). A 1,2-diacyl-sn-glycero-3-phospho-(1D-myo-inositol-3,4,5-trisphosphate) is bound by residues 268 to 271, Arg290, Tyr301, Arg311, Lys349, Asn360, and His361; that span reads KLGA. The tract at residues 397–405 is C-terminal autoinhibitory region; the sequence is RKKRISVKK.

As to quaternary structure, heteromer. Composed of TAMALIN, CYTH2 and at least one GRM1. Interacts with ARRB1. Interacts with ARL4D; the interaction is direct. Directly interacts with CCDC120 through the coiled coil domain; this interaction stabilizes CCDC120, possibly by preventing its ubiquitination, and is required for neurite growth in neuroblastoma cells. Interacts (via N-terminal domain) with INAVA (via N-terminal domain).

Its subcellular location is the cell membrane. It localises to the cytoplasm. It is found in the cell projection. The protein resides in the growth cone. Its function is as follows. Acts as a guanine-nucleotide exchange factor (GEF). Promotes guanine-nucleotide exchange on ARF1, ARF3 and ARF6. Promotes the activation of ARF factors through replacement of GDP with GTP. The cell membrane form, in association with ARL4 proteins, recruits ARF6 to the plasma membrane. Involved in neurite growth. This is Cytohesin-2 (CYTH2) from Bos taurus (Bovine).